The following is a 158-amino-acid chain: D-aminoacyl-tRNA deacylase (158 aa).

A Gly-cisPro motif, important for rejection of L-amino acids motif is present at residues 143–144 (GP).

It belongs to the DTD family. Homodimer.

It localises to the cytoplasm. The catalysed reaction is glycyl-tRNA(Ala) + H2O = tRNA(Ala) + glycine + H(+). The enzyme catalyses a D-aminoacyl-tRNA + H2O = a tRNA + a D-alpha-amino acid + H(+). An aminoacyl-tRNA editing enzyme that deacylates mischarged D-aminoacyl-tRNAs. Also deacylates mischarged glycyl-tRNA(Ala), protecting cells against glycine mischarging by AlaRS. Acts via tRNA-based rather than protein-based catalysis; rejects L-amino acids rather than detecting D-amino acids in the active site. By recycling D-aminoacyl-tRNA to D-amino acids and free tRNA molecules, this enzyme counteracts the toxicity associated with the formation of D-aminoacyl-tRNA entities in vivo and helps enforce protein L-homochirality. The sequence is that of D-aminoacyl-tRNA deacylase from Solidesulfovibrio magneticus (strain ATCC 700980 / DSM 13731 / RS-1) (Desulfovibrio magneticus).